We begin with the raw amino-acid sequence, 433 residues long: DNA polymerase processivity factor (433 aa).

Residues 274–433 (RGDPFDKNYV…VPNTKKQKCG (160 aa)) are disordered. Residues 298 to 307 (SLSSLANAGG) show a composition bias toward low complexity. 2 stretches are compositionally biased toward gly residues: residues 325-336 (GLGGLGGGGGGG) and 344-359 (GGGG…GGGG). Residues 360 to 376 (GDHDHGLSSKEKYEQHK) are compositionally biased toward basic and acidic residues. Residues 385 to 398 (GGSGGGGGGGGGGL) are compositionally biased toward gly residues.

The protein belongs to the herpesviridae polymerase accessory protein family. As to quaternary structure, forms homodimers. Interacts with host SMARCB1. Interacts with host NCL/nucleolin; this interaction is important for the organization of proteins within viral replication compartments. Interacts with UL112/UL113; this interaction is necessary for efficient viral DNA replication. Interacts with UL84. Interacts with the uracil DNA glycosylase UL114. Interacts with the DNA polymerase catalytic subunit UL54. Interacts with host IRF3. Interacts with host RELA. Phosphorylated by UL97 on serine residues, phosphorylation seems important for UL44 nuclear entry but does not directly affect its role in replication. Post-translationally, sumoylated. Sumoylation on Lys-410 increases viral DNA replication.

Its subcellular location is the virion. It localises to the host nucleus. Its function is as follows. Accessory subunit of the DNA polymerase that plays an essential role in viral DNA replication and acts by increasing the processivity of polymerization. Forms dimers that binds to double-stranded DNA and UL54 specifically to stimulates long chain DNA synthesis efficiently. Plays an important role in maintaining the structure of viral replication compartments by interacting with host nucleolin/NUC. In addition, suppresses innate immune responses through effects on host IRF3 and NF-kappa-B. Mechanistically, interfere with the binding of IRF3 and the p65 NF-kappa-B subunit to the promoters of antiviral genes, thereby inhibiting the expression of these genes. The sequence is that of DNA polymerase processivity factor (UL44) from Human cytomegalovirus (strain Merlin) (HHV-5).